Consider the following 469-residue polypeptide: Serine hydroxymethyltransferase, cytosolic (469 aa).

An N6-(pyridoxal phosphate)lysine modification is found at lysine 248.

It belongs to the SHMT family. Homotetramer. Pyridoxal 5'-phosphate serves as cofactor.

The protein resides in the cytoplasm. The catalysed reaction is (6R)-5,10-methylene-5,6,7,8-tetrahydrofolate + glycine + H2O = (6S)-5,6,7,8-tetrahydrofolate + L-serine. It functions in the pathway one-carbon metabolism; tetrahydrofolate interconversion. Its function is as follows. Interconversion of serine and glycine. The sequence is that of Serine hydroxymethyltransferase, cytosolic (SHM2) from Eremothecium gossypii (strain ATCC 10895 / CBS 109.51 / FGSC 9923 / NRRL Y-1056) (Yeast).